The chain runs to 234 residues: Sugar fermentation stimulation protein homolog (234 aa).

It belongs to the SfsA family.

This is Sugar fermentation stimulation protein homolog from Pectobacterium atrosepticum (strain SCRI 1043 / ATCC BAA-672) (Erwinia carotovora subsp. atroseptica).